The following is a 242-amino-acid chain: MTHVCSVILIRRSFDIYHEQQKISLHNESILLLEKNLADDFAFCSPDTRRLDIDELTVCHYLQNIRQLPRNLGLHSKDRLLINQSPPMPLVTAIFDSFNESGVNSPILSNMLYLSCLSMFSHKKELIPLLFNSISTVSGKVERLISFDIAKRWYLRDIAERMYTSESLIKKKLQDENTCFSKILLASRMSMARRLLELRQIPLHTIAEKCGYSSTSYFINTFRQYYGVTPHQFAQHSPGTFS.

Positions 139–236 (GKVERLISFD…GVTPHQFAQH (98 aa)) constitute an HTH araC/xylS-type domain. DNA-binding regions (H-T-H motif) lie at residues 156 to 177 (RDIA…QDEN) and 203 to 226 (LHTI…RQYY).

Homodimer.

In terms of biological role, depending on the conditions (growth phase and medium), acts as a positive or negative regulator of gadA and gadBC. Repression occurs directly or via the repression of the expression of gadX. Activation occurs directly by the binding of GadW to the gadA and gadBC promoters. The sequence is that of HTH-type transcriptional regulator GadW (gadW) from Escherichia coli (strain K12).